We begin with the raw amino-acid sequence, 31 residues long: Elongation factor Tu (31 aa).

The protein belongs to the GTP-binding elongation factor family. EF-Tu/EF-1A subfamily. Monomer.

Its subcellular location is the cytoplasm. In terms of biological role, this protein promotes the GTP-dependent binding of aminoacyl-tRNA to the A-site of ribosomes during protein biosynthesis. The chain is Elongation factor Tu (tuf) from Streptomyces laurentii.